The primary structure comprises 828 residues: Protein TAPT1 homolog (828 aa).

Composition is skewed to low complexity over residues 67–83 (NNNNNNNSNNVSSGNHI), 212–233 (QQTQPQPQPQTQTTQQPSSQQP), and 302–321 (SNNNDNNDNNNNNNSKNNNN). 3 disordered regions span residues 67–92 (NNNNNNNSNNVSSGNHITNSNSNSSG), 212–236 (QQTQPQPQPQTQTTQQPSSQQPFSY), and 297–346 (QTTP…TSSI). The next 5 helical transmembrane spans lie at 428–448 (ISFGFLVCFDSFLFLFTFLPI), 472–492 (QIFDLFRGFIWVTCFVFLNFI), 562–582 (ILGPFTHLLVATGYVCLHSLV), 722–742 (SSWGVNNIIGFVPFPLASIVV), and 754–774 (IFGIFLMVQIYICLVLLKIFI). Residues 797–822 (LSSSSSSSSSNSLNTTSTTSTSTSTT) are compositionally biased toward low complexity. The tract at residues 797-828 (LSSSSSSSSSNSLNTTSTTSTSTSTTNDKKNN) is disordered.

The protein belongs to the TAPT1 family.

The protein localises to the membrane. This chain is Protein TAPT1 homolog, found in Dictyostelium discoideum (Social amoeba).